Consider the following 166-residue polypeptide: Interferon gamma (166 aa).

The first 23 residues, 1–23 (MNYTSYILAFQLCVILCSSGCNC), serve as a signal peptide directing secretion. Q24 bears the Pyrrolidone carboxylic acid mark. N39 and N106 each carry an N-linked (GlcNAc...) asparagine glycan.

It belongs to the type II (or gamma) interferon family. Homodimer. Interacts with IFNGR1 (via extracellular domain); this interaction promotes IFNGR1 dimerization. In terms of tissue distribution, released primarily from activated T lymphocytes.

It is found in the secreted. Its function is as follows. Type II interferon produced by immune cells such as T-cells and NK cells that plays crucial roles in antimicrobial, antiviral, and antitumor responses by activating effector immune cells and enhancing antigen presentation. Primarily signals through the JAK-STAT pathway after interaction with its receptor IFNGR1 to affect gene regulation. Upon IFNG binding, IFNGR1 intracellular domain opens out to allow association of downstream signaling components JAK2, JAK1 and STAT1, leading to STAT1 activation, nuclear translocation and transcription of IFNG-regulated genes. Many of the induced genes are transcription factors such as IRF1 that are able to further drive regulation of a next wave of transcription. Plays a role in class I antigen presentation pathway by inducing a replacement of catalytic proteasome subunits with immunoproteasome subunits. In turn, increases the quantity, quality, and repertoire of peptides for class I MHC loading. Increases the efficiency of peptide generation also by inducing the expression of activator PA28 that associates with the proteasome and alters its proteolytic cleavage preference. Up-regulates as well MHC II complexes on the cell surface by promoting expression of several key molecules such as cathepsins B/CTSB, H/CTSH, and L/CTSL. Participates in the regulation of hematopoietic stem cells during development and under homeostatic conditions by affecting their development, quiescence, and differentiation. The sequence is that of Interferon gamma (IFNG) from Canis lupus familiaris (Dog).